The sequence spans 356 residues: S-adenosylmethionine:tRNA ribosyltransferase-isomerase (356 aa).

The protein belongs to the QueA family. As to quaternary structure, monomer.

It localises to the cytoplasm. The enzyme catalyses 7-aminomethyl-7-carbaguanosine(34) in tRNA + S-adenosyl-L-methionine = epoxyqueuosine(34) in tRNA + adenine + L-methionine + 2 H(+). Its pathway is tRNA modification; tRNA-queuosine biosynthesis. Its function is as follows. Transfers and isomerizes the ribose moiety from AdoMet to the 7-aminomethyl group of 7-deazaguanine (preQ1-tRNA) to give epoxyqueuosine (oQ-tRNA). The protein is S-adenosylmethionine:tRNA ribosyltransferase-isomerase of Yersinia pestis.